An 817-amino-acid chain; its full sequence is Two pore calcium channel protein 1 (817 aa).

The Cytoplasmic portion of the chain corresponds to 1 to 113 (MAVSLDDDVP…VHNHFFYMME (113 aa)). Residues 20–65 (SAPLPPSNSLGQEQLPSKNGGSHSIHNSQVPSLVSGADSPPSSPTG) form a disordered region. A compositionally biased stretch (polar residues) spans 26–51 (SNSLGQEQLPSKNGGSHSIHNSQVPS). The helical transmembrane segment at 114 to 134 (LLTALLLLLLSLCESPAVPVL) threads the bilayer. The Extracellular portion of the chain corresponds to 135 to 137 (KLH). Residues 138–158 (TYVHATLELFALMVVVFELCM) form a helical membrane-spanning segment. At 159 to 172 (KLRWLGFHTFVRHK) the chain is on the cytoplasmic side. Residues 173–193 (RTMVKTSVLVVQFIEAIVVLV) form a helical membrane-spanning segment. The Extracellular portion of the chain corresponds to 194 to 202 (RQTSHVRVT). A helical membrane pass occupies residues 203-221 (RALRCIFLVDCRYCGGVRR). Residues 222-235 (NLRQIFQSLPPFMD) lie on the Cytoplasmic side of the membrane. Residues 236–256 (ILLLLLFFMIIFAILGFYLFS) form a helical membrane-spanning segment. The Extracellular segment spans residues 257–263 (TNPSDPY). Positions 264 to 287 (FSTLENSIVNLFVLLTTANFPDVM) form an intramembrane region, helical; Pore-forming. Residues 288 to 298 (MPSYSRNPWSC) lie on the Extracellular side of the membrane. A helical membrane pass occupies residues 299–319 (VFFIVYLSIELYFIMNLLLAV). Over 320 to 445 (VFDTFNDIEK…NILVNSKAFQ (126 aa)) the chain is Cytoplasmic. The chain crosses the membrane as a helical span at residues 446–466 (YFMYLVVAVNGVWILVETFML). The Extracellular portion of the chain corresponds to 467 to 480 (KGGNFTSKHVPWSY). N-linked (GlcNAc...) asparagine glycosylation occurs at N470. The helical transmembrane segment at 481–501 (LVFLTIYGVELFMKVAGLGPV) threads the bilayer. Over 502 to 504 (EYL) the chain is Cytoplasmic. Residues 505 to 527 (SSGWNLFDFSVTAFAFLGLLALT) form a helical membrane-spanning segment. The Extracellular segment spans residues 528-535 (LNMEPFYF). Residues 536–550 (IVVLRPLQLLRLFKL) form a helical membrane-spanning segment. Residues 551 to 569 (KKRYRNVLDTMFELLPRMA) lie on the Cytoplasmic side of the membrane. The helical transmembrane segment at 570-590 (SLGLTLLTFYYSFAIVGMEFF) threads the bilayer. At 591 to 630 (NGRLTPNCCNTSTVADAYRFINHTVGNKTKVEEGYYYLNN) the chain is on the extracellular side. The helical; Pore-forming intramembrane region spans 631 to 654 (FDNILNSFVTLFELTVVNNWYIIM). Residues 655–671 (EGVTSQTSHWSRLYFMT) lie on the Extracellular side of the membrane. The helical transmembrane segment at 672-692 (FYIVTMVVMTIIVAFILEAFV) threads the bilayer. Residues 693 to 817 (FRMNYSRKSQ…GSRQRSQTVT (125 aa)) are Cytoplasmic-facing. Positions 770–794 (SLKMYQEEIQEWYEEHAREQEQQKL) form a coiled coil. The tract at residues 785-817 (HAREQEQQKLRGSVPGPAAQQPPGSRQRSQTVT) is disordered. Residues 806 to 817 (PPGSRQRSQTVT) show a composition bias toward polar residues.

It belongs to the calcium channel alpha-1 subunit (TC 1.A.1.11) family. Two pore calcium channel subfamily. Dimer. Interacts with MTOR; the interaction is required for TPCN1 ATP sensitivity. Interacts with STX7, STX8 and STX12. Interacts with JPT2. Found in a complex with LSM12, TPCN1 and TPCN2. N-glycosylated. As to expression, mainly expressed in epithelial tissues like lung, kidney, colon, spleen and liver (at protein level).

The protein localises to the lysosome membrane. It is found in the endosome membrane. It localises to the early endosome membrane. The protein resides in the recycling endosome membrane. It carries out the reaction Na(+)(in) = Na(+)(out). The enzyme catalyses Ca(2+)(in) = Ca(2+)(out). With respect to regulation, na(+) current is inhibited by ATP in a MTORC-dependent manner. ATP sensitivity is independent of PI(3,5)P2. Probably regulated by Mg(2+) ions, cytosolic Mg(2+) selectively inhibits outward current while lysosomal Mg(2+) modestly inhibits both the outward and inward currents. In the absence of Mg(2+), NAADP readily activates TPCN2, with properties similar to PI(3,5)P2. Both current elicited by PI(3,5)P2 as well as NAADP are inhibited by tetrandrine. Functionally, intracellular channel initially characterized as a non-selective Ca(2+)-permeable channel activated by NAADP (nicotinic acid adenine dinucleotide phosphate), it is also a voltage-gated highly-selective Na(+) channel activated directly by PI(3,5)P2 (phosphatidylinositol 3,5-bisphosphate) that senses pH changes and confers electrical excitability to organelles. Localizes to the early and recycling endosomes membranes where it plays a role in the uptake and processing of proteins and regulates organellar membrane excitability, membrane trafficking and pH homeostasis. Ion selectivity is not fixed but rather agonist-dependent and under defined ionic conditions, can be readily activated by both NAADP and PI(3,5)P2. Required for mTOR-dependent nutrient sensing. This is Two pore calcium channel protein 1 from Mus musculus (Mouse).